A 201-amino-acid polypeptide reads, in one-letter code: LexA repressor (201 aa).

The segment at residues Val29–Lys49 is a DNA-binding region (H-T-H motif). Catalysis depends on for autocatalytic cleavage activity residues Ser125 and Lys162.

The protein belongs to the peptidase S24 family. As to quaternary structure, homodimer.

The enzyme catalyses Hydrolysis of Ala-|-Gly bond in repressor LexA.. Its function is as follows. Represses a number of genes involved in the response to DNA damage (SOS response), including recA and lexA. In the presence of single-stranded DNA, RecA interacts with LexA causing an autocatalytic cleavage which disrupts the DNA-binding part of LexA, leading to derepression of the SOS regulon and eventually DNA repair. The protein is LexA repressor of Clostridium botulinum (strain 657 / Type Ba4).